Reading from the N-terminus, the 46-residue chain is Mu-segestritoxin-Sf1g (46 aa).

Cystine bridges form between C3/C19, C10/C22, C18/C42, and C24/C40. The segment at 31–33 (RPW) is keys region for toxin activity.

Belongs to the neurotoxin 16 (SFI) family. In terms of tissue distribution, expressed by the venom gland.

The protein resides in the secreted. In terms of biological role, insecticidal toxin. It inhibits insect voltage-gated sodium channels (Nav) by partially blocking the channel pore in DUM neurons from the American cockroach, not by acting as a gating modifier. The inhibition is only partially reversible after prolonged washout. In vivo, the toxin causes flaccid paralysis followed by death when injected into Heliothis virescens larvae. It also causes uncoordinated movements followed by full paralysis to sheep blowflies (Lucilia cuprina). When the toxin is fused to snowdrop lectin, it is orally active against larvae of the tomato moth (Laconobia oleracea), the rice brown planthopper (Nilaparvata lugens), and the peach-potato aphid (Myzus persicae). This Segestria florentina (Tube-web spider) protein is Mu-segestritoxin-Sf1g.